The primary structure comprises 342 residues: Ketol-acid reductoisomerase (NADP(+)) (342 aa).

Positions Ala-2 to Thr-182 constitute a KARI N-terminal Rossmann domain. NADP(+) contacts are provided by residues Tyr-25 to Gln-28, Arg-48, Ser-51, Ser-53, and Asp-83 to Gln-86. The active site involves His-108. Gly-134 provides a ligand contact to NADP(+). A KARI C-terminal knotted domain is found at Thr-183–Val-328. The Mg(2+) site is built by Asp-191, Glu-195, Glu-227, and Glu-231. Substrate is bound at residue Ser-252.

This sequence belongs to the ketol-acid reductoisomerase family. It depends on Mg(2+) as a cofactor.

The catalysed reaction is (2R)-2,3-dihydroxy-3-methylbutanoate + NADP(+) = (2S)-2-acetolactate + NADPH + H(+). The enzyme catalyses (2R,3R)-2,3-dihydroxy-3-methylpentanoate + NADP(+) = (S)-2-ethyl-2-hydroxy-3-oxobutanoate + NADPH + H(+). Its pathway is amino-acid biosynthesis; L-isoleucine biosynthesis; L-isoleucine from 2-oxobutanoate: step 2/4. It functions in the pathway amino-acid biosynthesis; L-valine biosynthesis; L-valine from pyruvate: step 2/4. Functionally, involved in the biosynthesis of branched-chain amino acids (BCAA). Catalyzes an alkyl-migration followed by a ketol-acid reduction of (S)-2-acetolactate (S2AL) to yield (R)-2,3-dihydroxy-isovalerate. In the isomerase reaction, S2AL is rearranged via a Mg-dependent methyl migration to produce 3-hydroxy-3-methyl-2-ketobutyrate (HMKB). In the reductase reaction, this 2-ketoacid undergoes a metal-dependent reduction by NADPH to yield (R)-2,3-dihydroxy-isovalerate. This chain is Ketol-acid reductoisomerase (NADP(+)), found in Beutenbergia cavernae (strain ATCC BAA-8 / DSM 12333 / CCUG 43141 / JCM 11478 / NBRC 16432 / NCIMB 13614 / HKI 0122).